A 339-amino-acid polypeptide reads, in one-letter code: Dihydroorotase (339 aa).

Residues His-12 and His-14 each contribute to the Zn(2+) site. Residues 14–16 (HVR) and Asn-40 each bind substrate. Zn(2+) is bound by residues Lys-94, His-133, His-167, and Asp-239. An N6-carboxylysine modification is found at Lys-94. His-133 provides a ligand contact to substrate. The active site involves Asp-239. Substrate contacts are provided by His-243 and Ala-255.

This sequence belongs to the metallo-dependent hydrolases superfamily. DHOase family. Class II DHOase subfamily. In terms of assembly, homodimer. Requires Zn(2+) as cofactor.

The catalysed reaction is (S)-dihydroorotate + H2O = N-carbamoyl-L-aspartate + H(+). It functions in the pathway pyrimidine metabolism; UMP biosynthesis via de novo pathway; (S)-dihydroorotate from bicarbonate: step 3/3. Catalyzes the reversible cyclization of carbamoyl aspartate to dihydroorotate. The sequence is that of Dihydroorotase from Helicobacter pylori (strain J99 / ATCC 700824) (Campylobacter pylori J99).